The sequence spans 205 residues: Protein-L-isoaspartate O-methyltransferase (205 aa).

The active site involves Ser52.

It belongs to the methyltransferase superfamily. L-isoaspartyl/D-aspartyl protein methyltransferase family.

Its subcellular location is the cytoplasm. The enzyme catalyses [protein]-L-isoaspartate + S-adenosyl-L-methionine = [protein]-L-isoaspartate alpha-methyl ester + S-adenosyl-L-homocysteine. Functionally, catalyzes the methyl esterification of L-isoaspartyl residues in peptides and proteins that result from spontaneous decomposition of normal L-aspartyl and L-asparaginyl residues. It plays a role in the repair and/or degradation of damaged proteins. The protein is Protein-L-isoaspartate O-methyltransferase of Gloeobacter violaceus (strain ATCC 29082 / PCC 7421).